We begin with the raw amino-acid sequence, 227 residues long: Octanoyltransferase (227 aa).

One can recognise a BPL/LPL catalytic domain in the interval 35–210 (DKTPDEIWLV…TFLQLVGYSA (176 aa)). Substrate contacts are provided by residues 74–81 (RGGQVTYH), 141–143 (SLG), and 154–156 (GLA). The active-site Acyl-thioester intermediate is the C172.

This sequence belongs to the LipB family.

It is found in the cytoplasm. The enzyme catalyses octanoyl-[ACP] + L-lysyl-[protein] = N(6)-octanoyl-L-lysyl-[protein] + holo-[ACP] + H(+). It functions in the pathway protein modification; protein lipoylation via endogenous pathway; protein N(6)-(lipoyl)lysine from octanoyl-[acyl-carrier-protein]: step 1/2. Functionally, catalyzes the transfer of endogenously produced octanoic acid from octanoyl-acyl-carrier-protein onto the lipoyl domains of lipoate-dependent enzymes. Lipoyl-ACP can also act as a substrate although octanoyl-ACP is likely to be the physiological substrate. The chain is Octanoyltransferase from Pectobacterium atrosepticum (strain SCRI 1043 / ATCC BAA-672) (Erwinia carotovora subsp. atroseptica).